Here is a 261-residue protein sequence, read N- to C-terminus: tRNA pseudouridine synthase A (261 aa).

Residue aspartate 51 is the Nucleophile of the active site. Residue tyrosine 109 coordinates substrate.

This sequence belongs to the tRNA pseudouridine synthase TruA family. In terms of assembly, homodimer.

It catalyses the reaction uridine(38/39/40) in tRNA = pseudouridine(38/39/40) in tRNA. Functionally, formation of pseudouridine at positions 38, 39 and 40 in the anticodon stem and loop of transfer RNAs. The protein is tRNA pseudouridine synthase A of Shewanella sp. (strain MR-7).